The chain runs to 271 residues: Formamidopyrimidine-DNA glycosylase (271 aa).

The active-site Schiff-base intermediate with DNA is the Pro2. Glu3 acts as the Proton donor in catalysis. The active-site Proton donor; for beta-elimination activity is Lys58. DNA is bound by residues His91 and Arg109. An FPG-type zinc finger spans residues 236-270 (FVYGREGLACRVCATPVRRVVIGQRSTFFCPRCQR). The active-site Proton donor; for delta-elimination activity is the Arg260.

The protein belongs to the FPG family. As to quaternary structure, monomer. Requires Zn(2+) as cofactor.

It catalyses the reaction Hydrolysis of DNA containing ring-opened 7-methylguanine residues, releasing 2,6-diamino-4-hydroxy-5-(N-methyl)formamidopyrimidine.. The enzyme catalyses 2'-deoxyribonucleotide-(2'-deoxyribose 5'-phosphate)-2'-deoxyribonucleotide-DNA = a 3'-end 2'-deoxyribonucleotide-(2,3-dehydro-2,3-deoxyribose 5'-phosphate)-DNA + a 5'-end 5'-phospho-2'-deoxyribonucleoside-DNA + H(+). Its function is as follows. Involved in base excision repair of DNA damaged by oxidation or by mutagenic agents. Acts as a DNA glycosylase that recognizes and removes damaged bases. Has a preference for oxidized purines, such as 7,8-dihydro-8-oxoguanine (8-oxoG). Has AP (apurinic/apyrimidinic) lyase activity and introduces nicks in the DNA strand. Cleaves the DNA backbone by beta-delta elimination to generate a single-strand break at the site of the removed base with both 3'- and 5'-phosphates. This Aromatoleum aromaticum (strain DSM 19018 / LMG 30748 / EbN1) (Azoarcus sp. (strain EbN1)) protein is Formamidopyrimidine-DNA glycosylase.